The chain runs to 149 residues: 3-hydroxyacyl-[acyl-carrier-protein] dehydratase FabZ (149 aa).

Residue His53 is part of the active site.

Belongs to the thioester dehydratase family. FabZ subfamily.

It is found in the cytoplasm. It catalyses the reaction a (3R)-hydroxyacyl-[ACP] = a (2E)-enoyl-[ACP] + H2O. Involved in unsaturated fatty acids biosynthesis. Catalyzes the dehydration of short chain beta-hydroxyacyl-ACPs and long chain saturated and unsaturated beta-hydroxyacyl-ACPs. The chain is 3-hydroxyacyl-[acyl-carrier-protein] dehydratase FabZ from Neisseria meningitidis serogroup C / serotype 2a (strain ATCC 700532 / DSM 15464 / FAM18).